Here is a 342-residue protein sequence, read N- to C-terminus: Phenylalanine--tRNA ligase alpha subunit (342 aa).

Position 257 (Glu257) interacts with Mg(2+).

Belongs to the class-II aminoacyl-tRNA synthetase family. Phe-tRNA synthetase alpha subunit type 1 subfamily. As to quaternary structure, tetramer of two alpha and two beta subunits. Mg(2+) serves as cofactor.

It is found in the cytoplasm. The catalysed reaction is tRNA(Phe) + L-phenylalanine + ATP = L-phenylalanyl-tRNA(Phe) + AMP + diphosphate + H(+). The polypeptide is Phenylalanine--tRNA ligase alpha subunit (Chlamydia trachomatis serovar A (strain ATCC VR-571B / DSM 19440 / HAR-13)).